Consider the following 293-residue polypeptide: Fructose-bisphosphate aldolase (293 aa).

Residue Ser-50 coordinates D-glyceraldehyde 3-phosphate. Asp-85 functions as the Proton donor in the catalytic mechanism. 4 residues coordinate Zn(2+): His-86, Asp-106, Glu-136, and His-178. Gly-179 serves as a coordination point for dihydroxyacetone phosphate. Zn(2+) is bound at residue His-208. Dihydroxyacetone phosphate contacts are provided by residues 209–211 and 230–233; these read GGS and NVNT.

This sequence belongs to the class II fructose-bisphosphate aldolase family. Zn(2+) is required as a cofactor.

The enzyme catalyses beta-D-fructose 1,6-bisphosphate = D-glyceraldehyde 3-phosphate + dihydroxyacetone phosphate. It participates in carbohydrate degradation; glycolysis; D-glyceraldehyde 3-phosphate and glycerone phosphate from D-glucose: step 4/4. Catalyzes the aldol condensation of dihydroxyacetone phosphate (DHAP or glycerone-phosphate) with glyceraldehyde 3-phosphate (G3P) to form fructose 1,6-bisphosphate (FBP) in gluconeogenesis and the reverse reaction in glycolysis. The protein is Fructose-bisphosphate aldolase (fba) of Streptococcus pneumoniae serotype 4 (strain ATCC BAA-334 / TIGR4).